The following is a 233-amino-acid chain: MDLQGLKITWLGHATFRVVTPKGTHILIDPWVMGNPACPETEKQVKKVDVMLITHGHFDHIGDAVEIAKKHSPKVVCIPEMGAWLQKKGVKNVAEMNKGGTQHVGDIAVTMVHAVHSCGITDGDQVVYGGEACGYVLKFDNDVTLYHAGDTMAFSDMKIIHELWRPQIAMLPIGDHYTMDPRQAAYAAELLQPKAIIPMHFGTFPVLTGKPSELEKFVEVCDVHEMKPGETWS.

Belongs to the UPF0173 family.

In Koribacter versatilis (strain Ellin345), this protein is UPF0173 metal-dependent hydrolase Acid345_3437.